A 402-amino-acid chain; its full sequence is Nicotinate phosphoribosyltransferase (402 aa).

A Phosphohistidine; by autocatalysis modification is found at H224.

This sequence belongs to the NAPRTase family. In terms of processing, transiently phosphorylated on a His residue during the reaction cycle. Phosphorylation strongly increases the affinity for substrates and increases the rate of nicotinate D-ribonucleotide production. Dephosphorylation regenerates the low-affinity form of the enzyme, leading to product release.

It carries out the reaction nicotinate + 5-phospho-alpha-D-ribose 1-diphosphate + ATP + H2O = nicotinate beta-D-ribonucleotide + ADP + phosphate + diphosphate. It participates in cofactor biosynthesis; NAD(+) biosynthesis; nicotinate D-ribonucleotide from nicotinate: step 1/1. Its function is as follows. Catalyzes the synthesis of beta-nicotinate D-ribonucleotide from nicotinate and 5-phospho-D-ribose 1-phosphate at the expense of ATP. This Neisseria meningitidis serogroup B (strain ATCC BAA-335 / MC58) protein is Nicotinate phosphoribosyltransferase.